Consider the following 145-residue polypeptide: Putative pre-16S rRNA nuclease (145 aa).

This sequence belongs to the YqgF nuclease family.

It is found in the cytoplasm. Its function is as follows. Could be a nuclease involved in processing of the 5'-end of pre-16S rRNA. This is Putative pre-16S rRNA nuclease from Microcystis aeruginosa (strain NIES-843 / IAM M-2473).